Here is a 211-residue protein sequence, read N- to C-terminus: Protein Nef (211 aa).

Gly2 is lipidated: N-myristoyl glycine; by host. Ser6 is subject to Phosphoserine; by host. Positions 67–70 (EDEE) are acidic; interacts with host PACS1 and PACS2; stabilizes the interaction of NEF/MHC-I with host AP1M1; necessary for MHC-I internalization. Residues 74–83 (PVRPQVPLRP) form an SH3-binding; interaction with Src family tyrosine kinases region. Positions 77–80 (PQVP) match the PxxP; stabilizes the interaction of NEF/MHC-I with host AP1M1; necessary for MHC-I internalization motif. The interval 113 to 129 (DILDLWVYHTQGYFPDW) is mediates dimerization, Nef-PTE1 interaction. The binding to ATP6V1H stretch occupies residues 153 to 185 (MDPDQVEEANEGENNSLLHPISLHGMDDPEKEV). The Dileucine internalization motif; necessary for CD4 internalization signature appears at 169-170 (LL). The Diacidic; necessary for CD4 internalization signature appears at 179–180 (DD).

The protein belongs to the lentivirus primate group Nef protein family. In terms of assembly, monomer; cytosolic form. Homodimer; membrane bound form. Interacts with Nef associated p21-activated kinase (PAK2); this interaction activates PAK2. Associates with the Nef-MHC-I-AP1 complex; this complex is required for MHC-I internalization. Interacts (via C-terminus) with host PI3-kinase. Interacts with host PACS1; this interaction seems to be weak. Interacts with host PACS2. Interacts with host LCK and MAPK3; these interactions inhibit the kinase activity of the latter. Interacts with host ATP6V1H; this interaction may play a role in CD4 endocytosis. Associates with the CD4-Nef-AP2 complex; this complex is required for CD4 internalization. Interacts with host AP2 subunit alpha and AP2 subunit sigma2. Interacts with TCR-zeta chain; this interaction up-regulates the Fas ligand (FasL) surface expression. Interacts with host HCK, LYN, and SRC; these interactions activate the Src family kinases. Interacts with MAP3K5; this interaction inhibits the Fas and TNFR-mediated death signals. Interacts with beta-COP and PTE1. Interacts with human RACK1; this increases Nef phosphorylation by PKC. Interacts with TP53; this interaction decreases the half-life of TP53, protecting the infected cell against p53-mediated apoptosis. Post-translationally, the virion-associated Nef proteins are cleaved by the viral protease to release the soluble C-terminal core protein. Nef is probably cleaved concomitantly with viral structural proteins on maturation of virus particles. Myristoylated. In terms of processing, phosphorylated on serine residues, probably by host PKCdelta and theta.

The protein resides in the host cell membrane. Its subcellular location is the virion. It localises to the secreted. The protein localises to the host Golgi apparatus membrane. Its function is as follows. Factor of infectivity and pathogenicity, required for optimal virus replication. Alters numerous pathways of T-lymphocyte function and down-regulates immunity surface molecules in order to evade host defense and increase viral infectivity. Alters the functionality of other immunity cells, like dendritic cells, monocytes/macrophages and NK cells. In terms of biological role, in infected CD4(+) T-lymphocytes, down-regulates the surface MHC-I, mature MHC-II, CD4, CD28, CCR5 and CXCR4 molecules. Mediates internalization and degradation of host CD4 through the interaction of with the cytoplasmic tail of CD4, the recruitment of AP-2 (clathrin adapter protein complex 2), internalization through clathrin coated pits, and subsequent transport to endosomes and lysosomes for degradation. Diverts host MHC-I molecules to the trans-Golgi network-associated endosomal compartments by an endocytic pathway to finally target them for degradation. MHC-I down-regulation may involve AP-1 (clathrin adapter protein complex 1) or possibly Src family kinase-ZAP70/Syk-PI3K cascade recruited by PACS2. In consequence infected cells are masked for immune recognition by cytotoxic T-lymphocytes. Decreasing the number of immune receptors also prevents reinfection by more HIV particles (superinfection). Down-regulates host SERINC3 and SERINC5 thereby excluding these proteins from the viral particles. Virion infectivity is drastically higher when SERINC3 or SERINC5 are excluded from the viral envelope, because these host antiviral proteins impair the membrane fusion event necessary for subsequent virion penetration. Bypasses host T-cell signaling by inducing a transcriptional program nearly identical to that of anti-CD3 cell activation. Interaction with TCR-zeta chain up-regulates the Fas ligand (FasL). Increasing surface FasL molecules and decreasing surface MHC-I molecules on infected CD4(+) cells send attacking cytotoxic CD8+ T-lymphocytes into apoptosis. Functionally, plays a role in optimizing the host cell environment for viral replication without causing cell death by apoptosis. Protects the infected cells from apoptosis in order to keep them alive until the next virus generation is ready to strike. Inhibits the Fas and TNFR-mediated death signals by blocking MAP3K5/ASK1. Decreases the half-life of TP53, protecting the infected cell against p53-mediated apoptosis. Inhibits the apoptotic signals regulated by the Bcl-2 family proteins through the formation of a Nef/PI3-kinase/PAK2 complex that leads to activation of PAK2 and induces phosphorylation of host BAD. Its function is as follows. Extracellular Nef protein targets CD4(+) T-lymphocytes for apoptosis by interacting with CXCR4 surface receptors. The protein is Protein Nef of Homo sapiens (Human).